The chain runs to 197 residues: Dephospho-CoA kinase (197 aa).

Positions 2–197 constitute a DPCK domain; it reads IIGITGGIAS…SALLLLANPR (196 aa). 10–15 is a binding site for ATP; the sequence is ASGKST.

It belongs to the CoaE family.

It is found in the cytoplasm. It catalyses the reaction 3'-dephospho-CoA + ATP = ADP + CoA + H(+). The protein operates within cofactor biosynthesis; coenzyme A biosynthesis; CoA from (R)-pantothenate: step 5/5. Functionally, catalyzes the phosphorylation of the 3'-hydroxyl group of dephosphocoenzyme A to form coenzyme A. This chain is Dephospho-CoA kinase, found in Streptococcus pyogenes serotype M1.